The primary structure comprises 654 residues: Potassium voltage-gated channel subfamily A member 4 (654 aa).

Over 1 to 305 the chain is Cytoplasmic; that stretch reads MEVAMVSAES…LLFEYPESSS (305 aa). The interval 24-145 is disordered; it reads QARARERERL…EEGRFYYSEE (122 aa). A compositionally biased stretch (low complexity) spans 36–50; it reads SRAAAAAAVAAATAA. Basic residues predominate over residues 81-99; the sequence is GSRRRRRQRTEKKKLHHRQ. The residue at position 122 (serine 122) is a Phosphoserine. The segment covering 122–137 has biased composition (acidic residues); that stretch reads SEEEEDEEEEEEEEEE. A helical membrane pass occupies residues 306-327; the sequence is PARGIAIVSVLVILISIVIFCL. Over 328-371 the chain is Extracellular; sequence ETLPEFRDDRDLIMALSAGGHSRLLNDTSAPHLENSGHTIFNDP. A glycan (N-linked (GlcNAc...) asparagine) is linked at asparagine 353. Residues 372–393 form a helical membrane-spanning segment; that stretch reads FFIVETVCIVWFSFEFVVRCFA. Over 394-404 the chain is Cytoplasmic; sequence CPSQALFFKNI. The helical transmembrane segment at 405–425 threads the bilayer; it reads MNIIDIVSILPYFITLGTDLA. Residues 426–440 are Extracellular-facing; sequence QQQGGGNGQQQQAMS. Residues 441–461 form a helical; Voltage-sensor membrane-spanning segment; that stretch reads FAILRIIRLVRVFRIFKLSRH. Residues 462 to 476 lie on the Cytoplasmic side of the membrane; it reads SKGLQILGHTLRASM. The interval 463–476 is S4-S5 linker; that stretch reads KGLQILGHTLRASM. Residues 477–498 traverse the membrane as a helical segment; the sequence is RELGLLIFFLFIGVILFSSAVY. Over 499–512 the chain is Extracellular; the sequence is FAEADEPTTHFQSI. Positions 513-524 form an intramembrane region, helical; the sequence is PDAFWWAVVTMT. A Selectivity filter motif is present at residues 525-530; the sequence is TVGYGD. Residues 525 to 532 lie within the membrane without spanning it; the sequence is TVGYGDMK. The Extracellular segment spans residues 533 to 539; that stretch reads PITVGGK. Residues 540–568 form a helical membrane-spanning segment; that stretch reads IVGSLCAIAGVLTIALPVPVIVSNFNYFY. At 569–654 the chain is on the cytoplasmic side; that stretch reads HRETENEEQT…SNAKAVETDV (86 aa). Serine 600 bears the Phosphoserine; by PKA mark. A compositionally biased stretch (basic and acidic residues) spans 630-641; sequence CQGKGDESETDK. Positions 630–654 are disordered; that stretch reads CQGKGDESETDKNNCSNAKAVETDV. The PDZ-binding motif lies at 652 to 654; that stretch reads TDV.

Belongs to the potassium channel family. A (Shaker) (TC 1.A.1.2) subfamily. Kv1.4/KCNA4 sub-subfamily. Homotetramer and heterotetramer of potassium channel proteins. Interacts with KCNAB1 and KCNAB2. Interacts with DLG1, DLG2 and DLG4 via their PDZ domains. Interacts with SIGMAR1. Detected in a complex with KCNA1. Interacts with KCNA2. Part of a complex containing KCNA1, KCNAB1 and LGI1. Interacts (via cytoplasmic N-terminal domain) with KCNRG. As to expression, expressed in the brain, lens and retina.

It is found in the cell membrane. It localises to the cell projection. The protein resides in the axon. The enzyme catalyses K(+)(in) = K(+)(out). Voltage-gated potassium channel that mediates transmembrane potassium transport in excitable membranes. Forms tetrameric potassium-selective channels through which potassium ions pass in accordance with their electrochemical gradient. The channel alternates between opened and closed conformations in response to the voltage difference across the membrane. Can form functional homotetrameric channels and heterotetrameric channels that contain variable proportions of KCNA1, KCNA2, KCNA4, KCNA5, and possibly other family members as well; channel properties depend on the type of alpha subunits that are part of the channel. Channel properties are modulated by cytoplasmic beta subunits that regulate the subcellular location of the alpha subunits and promote rapid inactivation. In vivo, membranes probably contain a mixture of heteromeric potassium channel complexes, making it difficult to assign currents observed in intact tissues to any particular potassium channel family member. Homotetrameric KCNA4 forms a potassium channel that opens in response to membrane depolarization, followed by rapid spontaneous channel closure. Likewise, a heterotetrameric channel formed by KCNA1 and KCNA4 shows rapid inactivation. The chain is Potassium voltage-gated channel subfamily A member 4 (Kcna4) from Mus musculus (Mouse).